The following is a 292-amino-acid chain: Coatomer subunit epsilon-1 (292 aa).

This sequence belongs to the COPE family. In terms of assembly, oligomeric complex that consists of at least the alpha, beta, beta', gamma, delta, epsilon and zeta subunits.

The protein localises to the cytoplasm. It localises to the golgi apparatus membrane. Its subcellular location is the cytoplasmic vesicle. It is found in the COPI-coated vesicle membrane. In terms of biological role, the coatomer is a cytosolic protein complex that binds to dilysine motifs and reversibly associates with Golgi non-clathrin-coated vesicles, which further mediate biosynthetic protein transport from the ER, via the Golgi up to the trans Golgi network. The coatomer complex is required for budding from Golgi membranes, and is essential for the retrograde Golgi-to-ER transport of dilysine-tagged proteins. This chain is Coatomer subunit epsilon-1, found in Arabidopsis thaliana (Mouse-ear cress).